The following is a 274-amino-acid chain: DegV domain-containing protein Cgl2349/cg2579 (274 aa).

In terms of domain architecture, DegV spans 3-259; the sequence is VRVIVDSSAC…PGAVSVSAVF (257 aa). 2 residues coordinate hexadecanoate: Thr39 and Ser73.

Monomer.

In terms of biological role, binds long-chain fatty acids, such as palmitate, and may play a role in lipid transport or fatty acid metabolism. The polypeptide is DegV domain-containing protein Cgl2349/cg2579 (Corynebacterium glutamicum (strain ATCC 13032 / DSM 20300 / JCM 1318 / BCRC 11384 / CCUG 27702 / LMG 3730 / NBRC 12168 / NCIMB 10025 / NRRL B-2784 / 534)).